The sequence spans 162 residues: Beta-lactoglobulin-1 (162 aa).

Intrachain disulfides connect Cys66-Cys160 and Cys106-Cys119.

This sequence belongs to the calycin superfamily. Lipocalin family. In terms of assembly, monomer.

The protein resides in the secreted. Functionally, lactoglobulin is the primary component of whey, it binds retinol and is probably involved in the transport of that molecule. In Felis catus (Cat), this protein is Beta-lactoglobulin-1 (LGB1).